A 112-amino-acid chain; its full sequence is MGFRVLVLVVMATTSALPFTFFEEPGRSPFRPALRSEEAQALRHGLTLLLARRADGQPPDMRQPEMRRPEVRQLEFAELSVGQRRWDVDQCMYYCLTGVVGYSYTECQTMCT.

The first 22 residues, 1 to 22 (MGFRVLVLVVMATTSALPFTFF), serve as a signal peptide directing secretion. Residues 23-85 (EEPGRSPFRP…FAELSVGQRR (63 aa)) constitute a propeptide that is removed on maturation. 2 disulfides stabilise this stretch: C91/C111 and C95/C107.

It belongs to the conotoxin R superfamily. In terms of tissue distribution, expressed by the venom duct.

It localises to the secreted. The sequence is that of Conotoxin vil14.4 from Conus villepinii (Villepin's cone).